Consider the following 122-residue polypeptide: Large ribosomal subunit protein eL18 (122 aa).

This sequence belongs to the eukaryotic ribosomal protein eL18 family.

The chain is Large ribosomal subunit protein eL18 from Pyrobaculum aerophilum (strain ATCC 51768 / DSM 7523 / JCM 9630 / CIP 104966 / NBRC 100827 / IM2).